The sequence spans 883 residues: MNEQYSALRSNVSMLGKVLGETIKDALGEHILERVETIRKLSKSSRAGNDANRQELLTTLQNLSNDELLPVARAFSQFLNLANTAEQYHSISPKGEAASNPEVIARTLRKLKNQPELSEDTIKKAVESLSLELVLTAHPTEITRRTLIHKMVEVNACLKQLDNKDIADYEHNQLMRRLRQLIAQSWHTDEIRKLRPSPVDEAKWGFAVVENSLWQGVPNYLRELNEQLEENLGYKLPVEFVPVRFTSWMGGDRDGNPNVTADITRHVLLLSRWKATDLFLKDIQVLVSELSMVEATPELLALVGEEGAAEPYRYLMKNLRSRLMATQAWLEARLKGEELPKPEGLLTQNEELWEPLYACYQSLQACGMGIIANGDLLDTLRRVKCFGVPLVRIDIRQESTRHTEALGELTRYLGIGDYESWSEADKQAFLIRELNSKRPLLPRNWQPSAETREVLDTCQVIAEAPQGSIAAYVISMAKTPSDVLAVHLLLKEAGIGFAMPVAPLFETLDDLNNANDVMTQLLNIDWYRGLIQGKQMVMIGYSDSAKDAGVMAASWAQYQAQDALIKTCEKAGIELTLFHGRGGSIGRGGAPAHAALLSQPPGSLKGGLRVTEQGEMIRFKYGLPEITVSSLSLYTGAILEANLLPPPEPKESWRRIMDELSVISCDLYRGYVRENKDFVPYFRSATPEQELGKLPLGSRPAKRRPTGGVESLRAIPWIFAWTQNRLMLPAWLGAGTALQKVVEDGKQSELEAMCRDWPFFSTRLGMLEMVFAKADLWLAEYYDQRLVDKALWPLGKELRNLQEEDIKVVLAIANDSHLMADLPWIAESIQLRNIYTDPLNVLQAELLHRSRQAEKEGHEPDPRVEQALMVTIAGIAAGMRNTG.

Residues histidine 138 and lysine 546 contribute to the active site.

Belongs to the PEPCase type 1 family. It depends on Mg(2+) as a cofactor.

The catalysed reaction is oxaloacetate + phosphate = phosphoenolpyruvate + hydrogencarbonate. Functionally, forms oxaloacetate, a four-carbon dicarboxylic acid source for the tricarboxylic acid cycle. The sequence is that of Phosphoenolpyruvate carboxylase from Escherichia coli O7:K1 (strain IAI39 / ExPEC).